The primary structure comprises 286 residues: Aquaporin NIP1-3 (286 aa).

The segment at 1 to 44 (MAGGEHGVNGQHEETRAMEEGSRDHQARCENSEQDGGSKSSSNN) is disordered. Basic and acidic residues predominate over residues 11–31 (QHEETRAMEEGSRDHQARCEN). A compositionally biased stretch (polar residues) spans 34-44 (QDGGSKSSSNN). Transmembrane regions (helical) follow at residues 56–76 (VIAE…AVAV) and 84–104 (VTFP…VYSV). Positions 113 to 115 (NPA) match the NPA 1 motif. Transmembrane regions (helical) follow at residues 131–153 (VPAY…RALF), 172–192 (SLAM…GVAT), and 200–220 (LAGL…GPIS). The short motif at 225–227 (NPA) is the NPA 2 element. A helical membrane pass occupies residues 239–259 (YTGIWVYIAGPVFGAVAGAWA).

This sequence belongs to the MIP/aquaporin (TC 1.A.8) family. NIP (TC 1.A.8.12) subfamily.

Its subcellular location is the membrane. Functionally, aquaporins facilitate the transport of water and small neutral solutes across cell membranes. This chain is Aquaporin NIP1-3 (NIP1-3), found in Oryza sativa subsp. japonica (Rice).